A 363-amino-acid polypeptide reads, in one-letter code: NADH-quinone oxidoreductase subunit H (363 aa).

10 consecutive transmembrane segments (helical) span residues 29-49, 62-82, 96-116, 127-147, 163-183, 202-222, 238-257, 264-286, 299-319, and 339-359; these read VLKI…YVVW, GPMY…KLLF, FVIA…VVPF, VGLL…ILAG, AAQV…VMIA, FFDW…VSGV, EIVA…LFFL, ILVS…QGWV, KGGW…YIWF, and FIPL…YGVI.

It belongs to the complex I subunit 1 family. As to quaternary structure, NDH-1 is composed of 14 different subunits. Subunits NuoA, H, J, K, L, M, N constitute the membrane sector of the complex.

The protein localises to the cell inner membrane. It carries out the reaction a quinone + NADH + 5 H(+)(in) = a quinol + NAD(+) + 4 H(+)(out). In terms of biological role, NDH-1 shuttles electrons from NADH, via FMN and iron-sulfur (Fe-S) centers, to quinones in the respiratory chain. The immediate electron acceptor for the enzyme in this species is believed to be ubiquinone. Couples the redox reaction to proton translocation (for every two electrons transferred, four hydrogen ions are translocated across the cytoplasmic membrane), and thus conserves the redox energy in a proton gradient. This subunit may bind ubiquinone. The polypeptide is NADH-quinone oxidoreductase subunit H (Xanthomonas euvesicatoria pv. vesicatoria (strain 85-10) (Xanthomonas campestris pv. vesicatoria)).